Here is a 760-residue protein sequence, read N- to C-terminus: Xaa-Pro dipeptidyl-peptidase (760 aa).

Active-site charge relay system residues include S349, D469, and H499.

Belongs to the peptidase S15 family. In terms of assembly, homodimer.

The protein localises to the cytoplasm. The catalysed reaction is Hydrolyzes Xaa-Pro-|- bonds to release unblocked, N-terminal dipeptides from substrates including Ala-Pro-|-p-nitroanilide and (sequentially) Tyr-Pro-|-Phe-Pro-|-Gly-Pro-|-Ile.. Removes N-terminal dipeptides sequentially from polypeptides having unsubstituted N-termini provided that the penultimate residue is proline. The chain is Xaa-Pro dipeptidyl-peptidase from Streptococcus pyogenes serotype M3 (strain ATCC BAA-595 / MGAS315).